Reading from the N-terminus, the 337-residue chain is Holliday junction branch migration complex subunit RuvB (337 aa).

The tract at residues 4 to 186 (ADRLIAADNP…FGIVQRLEYY (183 aa)) is large ATPase domain (RuvB-L). ATP-binding positions include Ile-25, Arg-26, Gly-67, Lys-70, Thr-71, Thr-72, 133-135 (EDY), Arg-176, Tyr-186, and Arg-223. Thr-71 contributes to the Mg(2+) binding site. A small ATPAse domain (RuvB-S) region spans residues 187 to 257 (KVDDLQYIVQ…IADKALNMLD (71 aa)). Residues 260-337 (VCGFDYMDRK…LHFGIDRPDK (78 aa)) are head domain (RuvB-H). 2 residues coordinate DNA: Arg-315 and Arg-320.

The protein belongs to the RuvB family. Homohexamer. Forms an RuvA(8)-RuvB(12)-Holliday junction (HJ) complex. HJ DNA is sandwiched between 2 RuvA tetramers; dsDNA enters through RuvA and exits via RuvB. An RuvB hexamer assembles on each DNA strand where it exits the tetramer. Each RuvB hexamer is contacted by two RuvA subunits (via domain III) on 2 adjacent RuvB subunits; this complex drives branch migration. In the full resolvosome a probable DNA-RuvA(4)-RuvB(12)-RuvC(2) complex forms which resolves the HJ.

The protein localises to the cytoplasm. The enzyme catalyses ATP + H2O = ADP + phosphate + H(+). In terms of biological role, the RuvA-RuvB-RuvC complex processes Holliday junction (HJ) DNA during genetic recombination and DNA repair, while the RuvA-RuvB complex plays an important role in the rescue of blocked DNA replication forks via replication fork reversal (RFR). RuvA specifically binds to HJ cruciform DNA, conferring on it an open structure. The RuvB hexamer acts as an ATP-dependent pump, pulling dsDNA into and through the RuvAB complex. RuvB forms 2 homohexamers on either side of HJ DNA bound by 1 or 2 RuvA tetramers; 4 subunits per hexamer contact DNA at a time. Coordinated motions by a converter formed by DNA-disengaged RuvB subunits stimulates ATP hydrolysis and nucleotide exchange. Immobilization of the converter enables RuvB to convert the ATP-contained energy into a lever motion, pulling 2 nucleotides of DNA out of the RuvA tetramer per ATP hydrolyzed, thus driving DNA branch migration. The RuvB motors rotate together with the DNA substrate, which together with the progressing nucleotide cycle form the mechanistic basis for DNA recombination by continuous HJ branch migration. Branch migration allows RuvC to scan DNA until it finds its consensus sequence, where it cleaves and resolves cruciform DNA. This Aliivibrio salmonicida (strain LFI1238) (Vibrio salmonicida (strain LFI1238)) protein is Holliday junction branch migration complex subunit RuvB.